Consider the following 300-residue polypeptide: 4-hydroxy-tetrahydrodipicolinate synthase (300 aa).

Threonine 46 is a binding site for pyruvate. Tyrosine 134 (proton donor/acceptor) is an active-site residue. The active-site Schiff-base intermediate with substrate is the lysine 162. Residue isoleucine 207 participates in pyruvate binding.

It belongs to the DapA family. In terms of assembly, homotetramer; dimer of dimers.

The protein localises to the cytoplasm. It catalyses the reaction L-aspartate 4-semialdehyde + pyruvate = (2S,4S)-4-hydroxy-2,3,4,5-tetrahydrodipicolinate + H2O + H(+). The protein operates within amino-acid biosynthesis; L-lysine biosynthesis via DAP pathway; (S)-tetrahydrodipicolinate from L-aspartate: step 3/4. In terms of biological role, catalyzes the condensation of (S)-aspartate-beta-semialdehyde [(S)-ASA] and pyruvate to 4-hydroxy-tetrahydrodipicolinate (HTPA). The chain is 4-hydroxy-tetrahydrodipicolinate synthase from Protochlamydia amoebophila (strain UWE25).